We begin with the raw amino-acid sequence, 733 residues long: Acyl-coenzyme A oxidase (733 aa).

This sequence belongs to the acyl-CoA oxidase family. FAD is required as a cofactor.

It localises to the peroxisome. It catalyses the reaction a 2,3-saturated acyl-CoA + O2 = a (2E)-enoyl-CoA + H2O2. It functions in the pathway lipid metabolism; peroxisomal fatty acid beta-oxidation. The sequence is that of Acyl-coenzyme A oxidase (POX1) from Eremothecium gossypii (strain ATCC 10895 / CBS 109.51 / FGSC 9923 / NRRL Y-1056) (Yeast).